Reading from the N-terminus, the 1503-residue chain is Chromosome partition protein MukB (1503 aa).

A compositionally biased stretch (polar residues) spans Met-1–Lys-19. Positions Met-1–Leu-21 are disordered. Gly-65 to Ser-72 provides a ligand contact to ATP. Coiled coils occupy residues Met-370 to Ser-495, Asp-536 to Gln-616, Met-662 to Asp-697, Glu-865 to Glu-1173, and Asp-1238 to Ile-1293. The segment at Ala-696–Arg-813 is flexible hinge.

Belongs to the SMC family. MukB subfamily. In terms of assembly, homodimerization via its hinge domain. Binds to DNA via its C-terminal region. Interacts, and probably forms a ternary complex, with MukE and MukF via its C-terminal region. The complex formation is stimulated by calcium or magnesium. Interacts with tubulin-related protein FtsZ.

It localises to the cytoplasm. Its subcellular location is the nucleoid. Functionally, plays a central role in chromosome condensation, segregation and cell cycle progression. Functions as a homodimer, which is essential for chromosome partition. Involved in negative DNA supercoiling in vivo, and by this means organize and compact chromosomes. May achieve or facilitate chromosome segregation by condensation DNA from both sides of a centrally located replisome during cell division. This Haemophilus ducreyi (strain 35000HP / ATCC 700724) protein is Chromosome partition protein MukB.